Consider the following 244-residue polypeptide: Phosphoadenosine 5'-phosphosulfate reductase (244 aa).

Cys-239 acts as the Nucleophile; cysteine thiosulfonate intermediate in catalysis.

Belongs to the PAPS reductase family. CysH subfamily.

Its subcellular location is the cytoplasm. The enzyme catalyses [thioredoxin]-disulfide + sulfite + adenosine 3',5'-bisphosphate + 2 H(+) = [thioredoxin]-dithiol + 3'-phosphoadenylyl sulfate. It functions in the pathway sulfur metabolism; hydrogen sulfide biosynthesis; sulfite from sulfate: step 3/3. Catalyzes the formation of sulfite from phosphoadenosine 5'-phosphosulfate (PAPS) using thioredoxin as an electron donor. The polypeptide is Phosphoadenosine 5'-phosphosulfate reductase (Escherichia coli (strain K12 / MC4100 / BW2952)).